We begin with the raw amino-acid sequence, 171 residues long: UPF0763 protein Hac_0849 (171 aa).

It belongs to the UPF0763 family.

In Helicobacter acinonychis (strain Sheeba), this protein is UPF0763 protein Hac_0849.